Consider the following 520-residue polypeptide: Probable helicase MJECL08 (520 aa).

Residues arginine 162, 171-176 (GAGKSN), and 501-502 (KI) contribute to the ATP site.

Belongs to the HerA family.

It catalyses the reaction Couples ATP hydrolysis with the unwinding of duplex DNA at the replication fork by translocating in the 5'-3' direction. This creates two antiparallel DNA single strands (ssDNA). The leading ssDNA polymer is the template for DNA polymerase III holoenzyme which synthesizes a continuous strand.. The enzyme catalyses ATP + H2O = ADP + phosphate + H(+). It carries out the reaction Couples ATP hydrolysis with the unwinding of duplex DNA by translocating in the 3'-5' direction.. Functionally, a probably bidirectional DNA helicase. The protein is Probable helicase MJECL08 of Methanocaldococcus jannaschii (strain ATCC 43067 / DSM 2661 / JAL-1 / JCM 10045 / NBRC 100440) (Methanococcus jannaschii).